Reading from the N-terminus, the 573-residue chain is DEAD-box ATP-dependent RNA helicase 47B (573 aa).

The Q motif signature appears at 131-159 (KSFEELGLPPLLIDRLNKEGLSTPTEVQS). Residues 162-362 (IPIISQKHDA…RSWGHDPVLV (201 aa)) enclose the Helicase ATP-binding domain. 175–182 (SYTGSGKT) contributes to the ATP binding site. The short motif at 293 to 296 (DEVD) is the DEAD box element. Positions 421 to 565 (TLRRCIHALE…PCEFTEGKLL (145 aa)) constitute a Helicase C-terminal domain.

The protein belongs to the DEAD box helicase family.

It carries out the reaction ATP + H2O = ADP + phosphate + H(+). The protein is DEAD-box ATP-dependent RNA helicase 47B of Oryza sativa subsp. japonica (Rice).